The primary structure comprises 116 residues: MRHRCRVPKLGRPADQRDALIRTLTTELLRHGRISTTLARAKVIRSEADRMITLAKDGSLAARRQASGFLYDPELVQSVFAAAQERYGSRRGGYTRILRTVARRGDNSPMAIIELV.

Belongs to the bacterial ribosomal protein bL17 family. Part of the 50S ribosomal subunit. Contacts protein L32.

This Gloeobacter violaceus (strain ATCC 29082 / PCC 7421) protein is Large ribosomal subunit protein bL17.